Here is a 150-residue protein sequence, read N- to C-terminus: Large ribosomal subunit protein bL9 (150 aa).

This sequence belongs to the bacterial ribosomal protein bL9 family.

In terms of biological role, binds to the 23S rRNA. The polypeptide is Large ribosomal subunit protein bL9 (Paracidovorax citrulli (strain AAC00-1) (Acidovorax citrulli)).